We begin with the raw amino-acid sequence, 134 residues long: Phosphoribosyl-AMP cyclohydrolase (134 aa).

Asp80 is a Mg(2+) binding site. Cys81 is a Zn(2+) binding site. Mg(2+)-binding residues include Asp82 and Asp84. Zn(2+) contacts are provided by Cys98 and Cys105.

The protein belongs to the PRA-CH family. In terms of assembly, homodimer. Mg(2+) is required as a cofactor. The cofactor is Zn(2+).

The protein resides in the cytoplasm. It catalyses the reaction 1-(5-phospho-beta-D-ribosyl)-5'-AMP + H2O = 1-(5-phospho-beta-D-ribosyl)-5-[(5-phospho-beta-D-ribosylamino)methylideneamino]imidazole-4-carboxamide. The protein operates within amino-acid biosynthesis; L-histidine biosynthesis; L-histidine from 5-phospho-alpha-D-ribose 1-diphosphate: step 3/9. Functionally, catalyzes the hydrolysis of the adenine ring of phosphoribosyl-AMP. The chain is Phosphoribosyl-AMP cyclohydrolase from Herminiimonas arsenicoxydans.